The chain runs to 502 residues: ATP synthase subunit alpha (502 aa).

169–176 contacts ATP; that stretch reads GDRQTGKT.

This sequence belongs to the ATPase alpha/beta chains family. F-type ATPases have 2 components, CF(1) - the catalytic core - and CF(0) - the membrane proton channel. CF(1) has five subunits: alpha(3), beta(3), gamma(1), delta(1), epsilon(1). CF(0) has three main subunits: a(1), b(2) and c(9-12). The alpha and beta chains form an alternating ring which encloses part of the gamma chain. CF(1) is attached to CF(0) by a central stalk formed by the gamma and epsilon chains, while a peripheral stalk is formed by the delta and b chains.

The protein resides in the cell inner membrane. The catalysed reaction is ATP + H2O + 4 H(+)(in) = ADP + phosphate + 5 H(+)(out). Functionally, produces ATP from ADP in the presence of a proton gradient across the membrane. The alpha chain is a regulatory subunit. This Geotalea uraniireducens (strain Rf4) (Geobacter uraniireducens) protein is ATP synthase subunit alpha.